Consider the following 69-residue polypeptide: DNA-directed RNA polymerase subunit epsilon (69 aa).

Belongs to the RNA polymerase subunit epsilon family. As to quaternary structure, RNAP is composed of a core of 2 alpha, a beta and a beta' subunit. The core is associated with a delta subunit, and at least one of epsilon or omega. When a sigma factor is associated with the core the holoenzyme is formed, which can initiate transcription.

The catalysed reaction is RNA(n) + a ribonucleoside 5'-triphosphate = RNA(n+1) + diphosphate. Functionally, a non-essential component of RNA polymerase (RNAP). This chain is DNA-directed RNA polymerase subunit epsilon, found in Geobacillus sp. (strain WCH70).